The primary structure comprises 406 residues: F-box/WD repeat-containing protein mec-15 (406 aa).

The 48-residue stretch at 6 to 53 folds into the F-box domain; sequence PTELISLPSELLCHLFTYLPQRQLITEIPLVCRRFNTILNDDKFWSRR. 5 WD repeats span residues 101–142, 156–195, 242–279, 281–320, and 365–406; these read GHSA…NGED, AHSGWIWNMAQESTSTNFYTTSWDSTVKSWHITDNGALQN, LHKRAVIALAVQGDKIFTSGEDRLMMMVDRRNFSKPVL, EYSPTAYKSCLSLQCNQLLTSTSDGKVKLYDANNFNVLQT, and SHEL…DQEN.

As to quaternary structure, may interact with the SCF ubiquitin ligase complex component skr-1. Expressed in several neurons in the head, tail and ventral cord, but absent in touch receptor neurons in adults. Expressed in GABAergic and cholinergic motor neurons.

The protein resides in the perikaryon. Its function is as follows. Plays a role in mechanosensory transduction (touch sensitivity), touch receptor neuron development and synapse formation. Regulates expression of the protein snb-1 and the distribution of synaptic vesicles at synapses to promote synaptic transmission at the neuromuscular junctions of GABAergic motor neurons. This chain is F-box/WD repeat-containing protein mec-15, found in Caenorhabditis elegans.